The primary structure comprises 288 residues: ATP synthase gamma chain (288 aa).

Belongs to the ATPase gamma chain family. In terms of assembly, F-type ATPases have 2 components, CF(1) - the catalytic core - and CF(0) - the membrane proton channel. CF(1) has five subunits: alpha(3), beta(3), gamma(1), delta(1), epsilon(1). CF(0) has three main subunits: a, b and c.

It localises to the cell membrane. In terms of biological role, produces ATP from ADP in the presence of a proton gradient across the membrane. The gamma chain is believed to be important in regulating ATPase activity and the flow of protons through the CF(0) complex. This Staphylococcus aureus (strain bovine RF122 / ET3-1) protein is ATP synthase gamma chain.